Reading from the N-terminus, the 257-residue chain is Acetylglutamate kinase (257 aa).

Substrate contacts are provided by residues 43-44 (GG), Arg-65, and Asn-157. ATP contacts are provided by residues 180-185 (DVSGIL) and 208-210 (IIT).

It belongs to the acetylglutamate kinase family. ArgB subfamily. As to quaternary structure, homodimer.

Its subcellular location is the cytoplasm. It catalyses the reaction N-acetyl-L-glutamate + ATP = N-acetyl-L-glutamyl 5-phosphate + ADP. Its pathway is amino-acid biosynthesis; L-arginine biosynthesis; N(2)-acetyl-L-ornithine from L-glutamate: step 2/4. Catalyzes the ATP-dependent phosphorylation of N-acetyl-L-glutamate. This is Acetylglutamate kinase from Salmonella paratyphi B (strain ATCC BAA-1250 / SPB7).